The sequence spans 97 residues: Aspartyl/glutamyl-tRNA(Asn/Gln) amidotransferase subunit C (97 aa).

Residues 74-84 (TPEEATAAAPA) are compositionally biased toward low complexity. Residues 74–97 (TPEEATAAAPAREGTAFKVPRIIE) are disordered.

It belongs to the GatC family. Heterotrimer of A, B and C subunits.

The catalysed reaction is L-glutamyl-tRNA(Gln) + L-glutamine + ATP + H2O = L-glutaminyl-tRNA(Gln) + L-glutamate + ADP + phosphate + H(+). It catalyses the reaction L-aspartyl-tRNA(Asn) + L-glutamine + ATP + H2O = L-asparaginyl-tRNA(Asn) + L-glutamate + ADP + phosphate + 2 H(+). Functionally, allows the formation of correctly charged Asn-tRNA(Asn) or Gln-tRNA(Gln) through the transamidation of misacylated Asp-tRNA(Asn) or Glu-tRNA(Gln) in organisms which lack either or both of asparaginyl-tRNA or glutaminyl-tRNA synthetases. The reaction takes place in the presence of glutamine and ATP through an activated phospho-Asp-tRNA(Asn) or phospho-Glu-tRNA(Gln). The protein is Aspartyl/glutamyl-tRNA(Asn/Gln) amidotransferase subunit C of Anaeromyxobacter dehalogenans (strain 2CP-1 / ATCC BAA-258).